The following is a 167-amino-acid chain: Ubiquitin-fold modifier-conjugating enzyme 1 (167 aa).

The active-site Glycyl thioester intermediate is cysteine 116. Lysine 122 is covalently cross-linked (Glycyl lysine isopeptide (Lys-Gly) (interchain with G-Cter in UFM1)).

The protein belongs to the ubiquitin-conjugating enzyme family. UFC1 subfamily. As to quaternary structure, interacts with UBA5 (via C-terminus). Interacts with UFL1. Interacts with UFM1. Interacts with KIRREL3. Post-translationally, ufmylated at Lys-122. Deufmylated by UFSP1.

E2-like enzyme which specifically catalyzes the second step in ufmylation. Accepts the ubiquitin-like modifier UFM1 from the E1 enzyme UBA5 and forms an intermediate with UFM1 via a thioester linkage. Ufmylation is involved in various processes, such as ribosome recycling, response to DNA damage, interferon response or reticulophagy (also called ER-phagy). The sequence is that of Ubiquitin-fold modifier-conjugating enzyme 1 from Bos taurus (Bovine).